A 127-amino-acid polypeptide reads, in one-letter code: Aspartate 1-decarboxylase (127 aa).

The Schiff-base intermediate with substrate; via pyruvic acid role is filled by serine 25. Serine 25 is subject to Pyruvic acid (Ser). Threonine 57 contacts substrate. Tyrosine 58 (proton donor) is an active-site residue. Substrate is bound at residue 73–75 (GAA).

It belongs to the PanD family. As to quaternary structure, heterooctamer of four alpha and four beta subunits. Pyruvate serves as cofactor. Post-translationally, is synthesized initially as an inactive proenzyme, which is activated by self-cleavage at a specific serine bond to produce a beta-subunit with a hydroxyl group at its C-terminus and an alpha-subunit with a pyruvoyl group at its N-terminus.

Its subcellular location is the cytoplasm. It catalyses the reaction L-aspartate + H(+) = beta-alanine + CO2. It functions in the pathway cofactor biosynthesis; (R)-pantothenate biosynthesis; beta-alanine from L-aspartate: step 1/1. Functionally, catalyzes the pyruvoyl-dependent decarboxylation of aspartate to produce beta-alanine. This chain is Aspartate 1-decarboxylase, found in Staphylococcus aureus (strain bovine RF122 / ET3-1).